A 99-amino-acid chain; its full sequence is Orphan antixoxin protein TacA (99 aa).

Belongs to the TacA antitoxin family.

Functionally, putative antitoxin component of a toxin-antitoxin (TA) system; its cognate toxin (usually a tRNA acetylase) is unknown. This is Orphan antixoxin protein TacA from Haemophilus influenzae (strain ATCC 51907 / DSM 11121 / KW20 / Rd).